Here is a 252-residue protein sequence, read N- to C-terminus: Large ribosomal subunit protein uL30 (252 aa).

This sequence belongs to the universal ribosomal protein uL30 family.

Functionally, binds to G-rich structures in 28S rRNA and in mRNAs. Plays a regulatory role in the translation apparatus; inhibits cell-free translation of mRNAs. In Drosophila melanogaster (Fruit fly), this protein is Large ribosomal subunit protein uL30 (RpL7).